Here is a 212-residue protein sequence, read N- to C-terminus: Lipid A acyltransferase PagP (212 aa).

Positions Met1–Ala24 are cleaved as a signal peptide. Over residues Asn36–Pro47 the composition is skewed to polar residues. Positions Asn36–Trp56 are disordered. Active-site residues include His84, Asp127, and Ser128.

This sequence belongs to the lipid A palmitoyltransferase family. In terms of assembly, homodimer.

Its subcellular location is the cell outer membrane. The catalysed reaction is a lipid A + a 1,2-diacyl-sn-glycero-3-phosphocholine = a hepta-acyl lipid A + a 2-acyl-sn-glycero-3-phosphocholine. It carries out the reaction a lipid IVA + a 1,2-diacyl-sn-glycero-3-phosphocholine = a lipid IVB + a 2-acyl-sn-glycero-3-phosphocholine. The enzyme catalyses a lipid IIA + a 1,2-diacyl-sn-glycero-3-phosphocholine = a lipid IIB + a 2-acyl-sn-glycero-3-phosphocholine. Its function is as follows. Transfers a fatty acid residue from the sn-1 position of a phospholipid to the N-linked hydroxyfatty acid chain on the proximal unit of lipid A or its precursors. The protein is Lipid A acyltransferase PagP of Pectobacterium carotovorum subsp. carotovorum (strain PC1).